The chain runs to 546 residues: CTP synthase (546 aa).

Positions 1-269 (MRSKKTKFIF…DERLAEVLNI (269 aa)) are amidoligase domain. Residue serine 17 coordinates CTP. Serine 17 contacts UTP. ATP contacts are provided by residues 18–23 (SLGKGL) and aspartate 75. The Mg(2+) site is built by aspartate 75 and glutamate 143. Residues 150 to 152 (DIE), 190 to 195 (KTKPTQ), and lysine 226 contribute to the CTP site. Residues 190–195 (KTKPTQ) and lysine 226 contribute to the UTP site. Positions 295–537 (RIAIVGKYVN…IRAALAQRDA (243 aa)) constitute a Glutamine amidotransferase type-1 domain. Position 357 (glycine 357) interacts with L-glutamine. Cysteine 384 serves as the catalytic Nucleophile; for glutamine hydrolysis. L-glutamine contacts are provided by residues 385 to 388 (LGLQ), glutamate 408, and arginine 465. Active-site residues include histidine 510 and glutamate 512.

The protein belongs to the CTP synthase family. As to quaternary structure, homotetramer.

It carries out the reaction UTP + L-glutamine + ATP + H2O = CTP + L-glutamate + ADP + phosphate + 2 H(+). It catalyses the reaction L-glutamine + H2O = L-glutamate + NH4(+). The enzyme catalyses UTP + NH4(+) + ATP = CTP + ADP + phosphate + 2 H(+). It participates in pyrimidine metabolism; CTP biosynthesis via de novo pathway; CTP from UDP: step 2/2. With respect to regulation, allosterically activated by GTP, when glutamine is the substrate; GTP has no effect on the reaction when ammonia is the substrate. The allosteric effector GTP functions by stabilizing the protein conformation that binds the tetrahedral intermediate(s) formed during glutamine hydrolysis. Inhibited by the product CTP, via allosteric rather than competitive inhibition. Its function is as follows. Catalyzes the ATP-dependent amination of UTP to CTP with either L-glutamine or ammonia as the source of nitrogen. Regulates intracellular CTP levels through interactions with the four ribonucleotide triphosphates. The protein is CTP synthase of Myxococcus xanthus (strain DK1622).